The chain runs to 261 residues: 3'-5' ssDNA/RNA exonuclease TatD (261 aa).

A divalent metal cation-binding residues include E92, H128, and H153.

This sequence belongs to the metallo-dependent hydrolases superfamily. TatD-type hydrolase family. TatD subfamily. As to quaternary structure, monomer. It depends on Mg(2+) as a cofactor.

The protein localises to the cytoplasm. In terms of biological role, 3'-5' exonuclease that prefers single-stranded DNA and RNA. May play a role in the H(2)O(2)-induced DNA damage repair. The polypeptide is 3'-5' ssDNA/RNA exonuclease TatD (Erwinia billingiae (strain Eb661)).